We begin with the raw amino-acid sequence, 122 residues long: Large ribosomal subunit protein uL14 (122 aa).

This sequence belongs to the universal ribosomal protein uL14 family. As to quaternary structure, part of the 50S ribosomal subunit. Forms a cluster with proteins L3 and L19. In the 70S ribosome, L14 and L19 interact and together make contacts with the 16S rRNA in bridges B5 and B8. Interacts with ribosomal silencing factor RsfS, which may inhibit ribosomal subunit association.

Its function is as follows. Binds to 23S rRNA. Forms part of two intersubunit bridges in the 70S ribosome. The chain is Large ribosomal subunit protein uL14 from Treponema pallidum (strain Nichols).